We begin with the raw amino-acid sequence, 190 residues long: Hypoxanthine/guanine phosphoribosyltransferase (190 aa).

It belongs to the purine/pyrimidine phosphoribosyltransferase family. Archaeal HPRT subfamily. Homodimer.

The protein resides in the cytoplasm. The enzyme catalyses IMP + diphosphate = hypoxanthine + 5-phospho-alpha-D-ribose 1-diphosphate. It carries out the reaction GMP + diphosphate = guanine + 5-phospho-alpha-D-ribose 1-diphosphate. Its pathway is purine metabolism; IMP biosynthesis via salvage pathway; IMP from hypoxanthine: step 1/1. Catalyzes a salvage reaction resulting in the formation of IMP that is energically less costly than de novo synthesis. This is Hypoxanthine/guanine phosphoribosyltransferase from Methanosarcina barkeri (strain Fusaro / DSM 804).